Reading from the N-terminus, the 211-residue chain is Pyridoxine/pyridoxamine 5'-phosphate oxidase (211 aa).

Substrate contacts are provided by residues arginine 7–tyrosine 10 and lysine 65. FMN contacts are provided by residues arginine 60–lysine 65, tyrosine 75–threonine 76, arginine 81, lysine 82, and glutamine 104. Residues tyrosine 122, arginine 126, and serine 130 each contribute to the substrate site. Residues glutamine 139 to serine 140 and tryptophan 184 each bind FMN. Arginine 190–histidine 192 provides a ligand contact to substrate. Arginine 194 serves as a coordination point for FMN.

Belongs to the pyridoxamine 5'-phosphate oxidase family. As to quaternary structure, homodimer. The cofactor is FMN.

It carries out the reaction pyridoxamine 5'-phosphate + O2 + H2O = pyridoxal 5'-phosphate + H2O2 + NH4(+). The catalysed reaction is pyridoxine 5'-phosphate + O2 = pyridoxal 5'-phosphate + H2O2. The protein operates within cofactor metabolism; pyridoxal 5'-phosphate salvage; pyridoxal 5'-phosphate from pyridoxamine 5'-phosphate: step 1/1. Its pathway is cofactor metabolism; pyridoxal 5'-phosphate salvage; pyridoxal 5'-phosphate from pyridoxine 5'-phosphate: step 1/1. Functionally, catalyzes the oxidation of either pyridoxine 5'-phosphate (PNP) or pyridoxamine 5'-phosphate (PMP) into pyridoxal 5'-phosphate (PLP). In Vibrio cholerae serotype O1 (strain ATCC 39315 / El Tor Inaba N16961), this protein is Pyridoxine/pyridoxamine 5'-phosphate oxidase.